The primary structure comprises 245 residues: uncharacterized protein (245 aa).

Basic and acidic residues predominate over residues 162 to 174 (KEQSDVTTSERTR). The disordered stretch occupies residues 162–183 (KEQSDVTTSERTRSPPGSSKTT).

This is an uncharacterized protein from Homo sapiens (Human).